The sequence spans 156 residues: Ribosomal RNA large subunit methyltransferase H (156 aa).

Residues leucine 73, glycine 104, and 123 to 128 (IGPLTL) each bind S-adenosyl-L-methionine.

This sequence belongs to the RNA methyltransferase RlmH family. As to quaternary structure, homodimer.

The protein localises to the cytoplasm. It carries out the reaction pseudouridine(1915) in 23S rRNA + S-adenosyl-L-methionine = N(3)-methylpseudouridine(1915) in 23S rRNA + S-adenosyl-L-homocysteine + H(+). Specifically methylates the pseudouridine at position 1915 (m3Psi1915) in 23S rRNA. In Xanthomonas euvesicatoria pv. vesicatoria (strain 85-10) (Xanthomonas campestris pv. vesicatoria), this protein is Ribosomal RNA large subunit methyltransferase H.